A 157-amino-acid polypeptide reads, in one-letter code: Eukaryotic translation initiation factor 5A-1 (157 aa).

Serine 2 bears the N-acetylserine mark. At serine 2 the chain carries Phosphoserine. Phosphothreonine is present on residues threonine 7 and threonine 10. Lysine 51 carries the hypusine modification. Serine 74 is subject to Phosphoserine. Lysine 86 participates in a covalent cross-link: Glycyl lysine isopeptide (Lys-Gly) (interchain with G-Cter in ubiquitin).

It belongs to the eIF-5A family. In terms of assembly, homodimer. Binds to 80S ribosomes. Actively translating ribosomes show mutually exclusive binding of eIF5a (HYP2 or ANB1) and EFT1/eEF2. Interacts with DYS1 and LIA1. In terms of processing, lys-51 undergoes hypusination, a unique post-translational modification that consists in the addition of a butylamino group from spermidine to lysine side chain, leading to the formation of the unusual amino acid hypusine. eIF-5As are the only known proteins to undergo this modification, which is essential for their function.

Its subcellular location is the cytoplasm. In terms of biological role, translation factor that promotes translation elongation and termination, particularly upon ribosome stalling at specific amino acid sequence contexts. Binds between the exit (E) and peptidyl (P) site of the ribosome and promotes rescue of stalled ribosome: specifically required for efficient translation of polyproline-containing peptides as well as other motifs that stall the ribosome. Acts as a ribosome quality control (RQC) cofactor by joining the RQC complex to facilitate peptidyl transfer during CAT tailing step. Involved in actin dynamics and cell cycle progression, mRNA decay and probably in a pathway involved in stress response and maintenance of cell wall integrity. The protein is Eukaryotic translation initiation factor 5A-1 (HYP2) of Saccharomyces cerevisiae (strain ATCC 204508 / S288c) (Baker's yeast).